A 308-amino-acid polypeptide reads, in one-letter code: Oligopeptide transport ATP-binding protein AmiF (308 aa).

Positions 6-251 (VEIKDLEISF…PIHPYTQALL (246 aa)) constitute an ABC transporter domain. Position 42–49 (42–49 (GESGSGKT)) interacts with ATP.

Belongs to the ABC transporter superfamily.

It localises to the cell membrane. Its function is as follows. Part of the binding-protein-dependent transport system for oligopeptides. Probably responsible for energy coupling to the transport system. In Streptococcus pneumoniae serotype 4 (strain ATCC BAA-334 / TIGR4), this protein is Oligopeptide transport ATP-binding protein AmiF (amiF).